We begin with the raw amino-acid sequence, 373 residues long: Dual-specificity RNA methyltransferase RlmN (373 aa).

The active-site Proton acceptor is E94. One can recognise a Radical SAM core domain in the interval 100–339 (EDDRATLCVS…VIVRKTRGDD (240 aa)). A disulfide bond links C107 and C344. [4Fe-4S] cluster contacts are provided by C114, C118, and C121. Residues 168–169 (GE), S200, 222–224 (SIH), and N301 contribute to the S-adenosyl-L-methionine site. C344 acts as the S-methylcysteine intermediate in catalysis.

It belongs to the radical SAM superfamily. RlmN family. Requires [4Fe-4S] cluster as cofactor.

The protein localises to the cytoplasm. The enzyme catalyses adenosine(2503) in 23S rRNA + 2 reduced [2Fe-2S]-[ferredoxin] + 2 S-adenosyl-L-methionine = 2-methyladenosine(2503) in 23S rRNA + 5'-deoxyadenosine + L-methionine + 2 oxidized [2Fe-2S]-[ferredoxin] + S-adenosyl-L-homocysteine. The catalysed reaction is adenosine(37) in tRNA + 2 reduced [2Fe-2S]-[ferredoxin] + 2 S-adenosyl-L-methionine = 2-methyladenosine(37) in tRNA + 5'-deoxyadenosine + L-methionine + 2 oxidized [2Fe-2S]-[ferredoxin] + S-adenosyl-L-homocysteine. In terms of biological role, specifically methylates position 2 of adenine 2503 in 23S rRNA and position 2 of adenine 37 in tRNAs. m2A2503 modification seems to play a crucial role in the proofreading step occurring at the peptidyl transferase center and thus would serve to optimize ribosomal fidelity. This Shewanella sp. (strain MR-4) protein is Dual-specificity RNA methyltransferase RlmN.